A 1848-amino-acid chain; its full sequence is Chitin synthase E (1848 aa).

A compositionally biased stretch (low complexity) spans 1–17 (MAAPSPAGGAPSHAQSS). The tract at residues 1–22 (MAAPSPAGGAPSHAQSSLPSLP) is disordered. Positions 1–779 (MAAPSPAGGA…CWADLAKVGE (779 aa)) constitute a Myosin motor domain. An ATP-binding site is contributed by 102 to 109 (GESGSGKT). Residues 593–621 (SSKPLRMPSMARRKTSPSSRLAFDAGDAD) are disordered. The actin-binding stretch occupies residues 659–683 (LDIVNKCLSSTNLNPYFIFCLKPND). The next 2 membrane-spanning stretches (helical) occupy residues 889 to 909 (WIALVYLLTFYIPDFAIKLFG) and 928 to 948 (LIIWFSCGVAIFFIVAFPGLV). Residues 952-1040 (QHVYSAAELS…LLDYRPTNIS (89 aa)) form the Cytochrome b5 heme-binding domain. Asn-1038 and Asn-1063 each carry an N-linked (GlcNAc...) asparagine glycan. The helical transmembrane segment at 1200-1220 (FILAISVLICSIIVFKFLAAL) threads the bilayer. N-linked (GlcNAc...) asparagine glycans are attached at residues Asn-1423, Asn-1457, and Asn-1563. A run of 3 helical transmembrane segments spans residues 1595 to 1615 (LSTVIQPVTLAYIIYLIYWLV), 1621 to 1641 (IPYTSLILLAAIYGLQALIFI), and 1648 to 1668 (MVGWMIVYLLALPVFSLALPL). An N-linked (GlcNAc...) asparagine glycan is attached at Asn-1786. The region spanning 1790 to 1845 (LPSDDAILAEIREILRTADLMSVTKKSIKLELERRFGVNLDLKRPYINSATEAVLA) is the DEK-C domain.

The protein in the N-terminal section; belongs to the TRAFAC class myosin-kinesin ATPase superfamily. Myosin family. This sequence in the C-terminal section; belongs to the chitin synthase family. Class V subfamily.

Its subcellular location is the cell membrane. It localises to the cell septum. It is found in the cell tip. It carries out the reaction [(1-&gt;4)-N-acetyl-beta-D-glucosaminyl](n) + UDP-N-acetyl-alpha-D-glucosamine = [(1-&gt;4)-N-acetyl-beta-D-glucosaminyl](n+1) + UDP + H(+). Functionally, polymerizes chitin, a structural polymer of the cell wall and septum, by transferring the sugar moiety of UDP-GlcNAc to the non-reducing end of the growing chitin polymer. Important for hyphal growth and conidiophore development but not pathogenicity. The protein is Chitin synthase E of Aspergillus fumigatus (strain ATCC MYA-4609 / CBS 101355 / FGSC A1100 / Af293) (Neosartorya fumigata).